A 522-amino-acid polypeptide reads, in one-letter code: DNA-binding protein Ikaros (522 aa).

Disordered regions lie at residues 1–48 (MEME…HNNR) and 96–115 (AKVNGSHAGGPDSKGPYSSA). 4 consecutive C2H2-type zinc fingers follow at residues 125 to 147 (LKCDICGIVCIGPNVLMVHKRSH), 153 to 175 (FQCTQCGASFTQKGNLLRHIKLH), 181 to 203 (FKCHLCNYACRRRDALSGHLRTH), and 209 to 232 (HKCAYCGRSYKQRSSLEEHKERCH). The segment at 379 to 406 (KSASSEKDGSPSHSGQDSTDTESNNEEK) is disordered. 2 C2H2-type zinc fingers span residues 468–490 (YRCEHCRILFLDHVMYTIHMGCH) and 496–520 (FECNLCGHRSQDRYEFSSHMTRGEH).

This sequence belongs to the Ikaros C2H2-type zinc-finger protein family. In terms of tissue distribution, expression mainly limited to thymus, spleen and pronephros. Very low expression in liver. No expression in testis, brain, eye and muscle.

Its subcellular location is the nucleus. In terms of biological role, binds and activates the enhancer (delta-A element) of the CD3-delta gene. Functions in the specification and the maturation of the T-lymphocyte. Also interacts with a critical control element in the TDT (terminal deoxynucleotidyltransferase) promoter as well as with the promoters for other genes expressed during early stages of B- and T-cell development. Function is isoform-specific and is modulated by dominant-negative inactive isoforms. The chain is DNA-binding protein Ikaros (ikzf1) from Oncorhynchus mykiss (Rainbow trout).